The following is a 580-amino-acid chain: NADH-quinone oxidoreductase subunit C/D (580 aa).

The segment at 1 to 171 (MSFDQVIADA…PPFVLTDRLF (171 aa)) is NADH dehydrogenase I subunit C. The segment at 195–580 (ELMVLNFGPH…IDFVMSDVDR (386 aa)) is NADH dehydrogenase I subunit D.

The protein in the N-terminal section; belongs to the complex I 30 kDa subunit family. This sequence in the C-terminal section; belongs to the complex I 49 kDa subunit family. As to quaternary structure, NDH-1 is composed of 13 different subunits. Subunits NuoB, CD, E, F, and G constitute the peripheral sector of the complex.

The protein resides in the cell inner membrane. It catalyses the reaction a quinone + NADH + 5 H(+)(in) = a quinol + NAD(+) + 4 H(+)(out). In terms of biological role, NDH-1 shuttles electrons from NADH, via FMN and iron-sulfur (Fe-S) centers, to quinones in the respiratory chain. The immediate electron acceptor for the enzyme in this species is believed to be ubiquinone. Couples the redox reaction to proton translocation (for every two electrons transferred, four hydrogen ions are translocated across the cytoplasmic membrane), and thus conserves the redox energy in a proton gradient. The sequence is that of NADH-quinone oxidoreductase subunit C/D from Cereibacter sphaeroides (strain ATCC 17025 / ATH 2.4.3) (Rhodobacter sphaeroides).